The sequence spans 309 residues: DNA-directed RNA polymerase subunit alpha (309 aa).

The tract at residues 1–227 (MTFQVECVES…ALFEPLKNVS (227 aa)) is alpha N-terminal domain (alpha-NTD). Positions 237–309 (EPTPESQTPI…GIKLQESKVS (73 aa)) are alpha C-terminal domain (alpha-CTD).

This sequence belongs to the RNA polymerase alpha chain family. In terms of assembly, in cyanobacteria the RNAP catalytic core is composed of 2 alpha, 1 beta, 1 beta', 1 gamma and 1 omega subunit. When a sigma factor is associated with the core the holoenzyme is formed, which can initiate transcription.

The enzyme catalyses RNA(n) + a ribonucleoside 5'-triphosphate = RNA(n+1) + diphosphate. In terms of biological role, DNA-dependent RNA polymerase catalyzes the transcription of DNA into RNA using the four ribonucleoside triphosphates as substrates. The chain is DNA-directed RNA polymerase subunit alpha from Synechococcus elongatus (strain ATCC 33912 / PCC 7942 / FACHB-805) (Anacystis nidulans R2).